Reading from the N-terminus, the 226-residue chain is UPF0173 metal-dependent hydrolase Fnod_0635 (226 aa).

This sequence belongs to the UPF0173 family.

In Fervidobacterium nodosum (strain ATCC 35602 / DSM 5306 / Rt17-B1), this protein is UPF0173 metal-dependent hydrolase Fnod_0635.